A 265-amino-acid chain; its full sequence is MNTYAQESKLRLKTKIGADGRCVIEDNFFTPPFKLMAPFYPKDDLAEIMLLAVSPGLMKGDAQDMQLSIGQNCKLRITSQSFEKIHNTEDGFASRDMHIVVGENAFLDFAPFPLIPFENAHFKGNTTISLRSSSQLLYSEIIVAGRVARNELFKFNRLHTKISILQDEKPIYYDNTILDPKTTDMNNMCMFDGYTHYLNLVLVNCPIELSGVRGLIEESEGVDGAVSEIASSHLCVKALAKGSEPLLHLREKIARFTTQTITQKV.

It belongs to the UreD family. In terms of assembly, ureH, UreF and UreG form a complex that acts as a GTP-hydrolysis-dependent molecular chaperone, activating the urease apoprotein by helping to assemble the nickel containing metallocenter of UreC. The UreE protein probably delivers the nickel.

It is found in the cytoplasm. Required for maturation of urease via the functional incorporation of the urease nickel metallocenter. This is Urease accessory protein UreH from Helicobacter pylori (strain P12).